A 208-amino-acid chain; its full sequence is ATP-dependent Clp protease proteolytic subunit (208 aa).

The Nucleophile role is filled by serine 98. Histidine 123 is a catalytic residue.

This sequence belongs to the peptidase S14 family. As to quaternary structure, fourteen ClpP subunits assemble into 2 heptameric rings which stack back to back to give a disk-like structure with a central cavity, resembling the structure of eukaryotic proteasomes.

The protein localises to the cytoplasm. The catalysed reaction is Hydrolysis of proteins to small peptides in the presence of ATP and magnesium. alpha-casein is the usual test substrate. In the absence of ATP, only oligopeptides shorter than five residues are hydrolyzed (such as succinyl-Leu-Tyr-|-NHMec, and Leu-Tyr-Leu-|-Tyr-Trp, in which cleavage of the -Tyr-|-Leu- and -Tyr-|-Trp bonds also occurs).. In terms of biological role, cleaves peptides in various proteins in a process that requires ATP hydrolysis. Has a chymotrypsin-like activity. Plays a major role in the degradation of misfolded proteins. The sequence is that of ATP-dependent Clp protease proteolytic subunit from Wolbachia sp. subsp. Brugia malayi (strain TRS).